The primary structure comprises 745 residues: Immunoglobulin superfamily containing leucine-rich repeat protein 2 (745 aa).

The signal sequence occupies residues 1–19; it reads MGPFGALCLAWALLGVVRA. Residues 20–51 enclose the LRRNT domain; it reads CPEPCACVDKYAHQFADCAYKELREVPEGLPA. Over 20–589 the chain is Extracellular; that stretch reads CPEPCACVDK…VFSTKKELPS (570 aa). N-linked (GlcNAc...) asparagine glycans are attached at residues Asn-52 and Asn-73. LRR repeat units lie at residues 52-73, 76-97, 100-123, 124-145, and 148-169; these read NVTT…AFVN, QVTS…ALAV, QLKN…RNLS, ALQL…ALGA, and DLRS…TFDA. Asn-121 is a glycosylation site (N-linked (GlcNAc...) asparagine). The region spanning 181 to 232 is the LRRCT domain; it reads NPFHCSCGLVWLQAWAASTRVSLPEPDSIACASPPELQGVPVHRLPALPCAP. Residues 233-372 form the Ig-like domain; the sequence is PSVRLSAEPP…GTNSTSLRVT (140 aa). Cysteines 260 and 356 form a disulfide. Basic and acidic residues predominate over residues 290–300; it reads KEEDGGDKVED. The disordered stretch occupies residues 290–328; it reads KEEDGGDKVEDGEGDGDEDLPTQTEAPTPTPAPAWPAPP. Over residues 317 to 328 the composition is skewed to pro residues; that stretch reads TPTPAPAWPAPP. N-linked (GlcNAc...) asparagine glycosylation is found at Asn-338 and Asn-365. Residues 376–423 form a disordered region; that stretch reads AGPPKHAPGTGEEPDAQVPTSERKATTKGRSNSVLPFKPEGKTKGQGL. 2 N-linked (GlcNAc...) asparagine glycosylation sites follow: Asn-474 and Asn-563. The helical transmembrane segment at 590–610 threads the bilayer; that stretch reads LLVIVTVSVFLLVLATVPLLG. Residues 611 to 745 lie on the Cytoplasmic side of the membrane; sequence AACCHLLAKH…INGNYRQTAG (135 aa). The interval 654–697 is disordered; the sequence is SEKSYPARGEAGGEEPEEVPEEGLDEDVEQGDPSGDLQREESLA. A compositionally biased stretch (acidic residues) spans 665 to 683; that stretch reads GGEEPEEVPEEGLDEDVEQ. Position 719 is a phosphotyrosine (Tyr-719). Residue Ser-720 is modified to Phosphoserine.

Homomultimer. Interacts with NTRK1/TrkA. In terms of tissue distribution, at 11.5 dpc, expressed in spinal nerves, their roots and the ventral spinal cord. At 12.5 dpc, detected in the ventral spinal cord, dorsal root ganglia (DRG), dorsal and ventral roots and sympathetic chain ganglia. At 12.5 dpc, expressed in almost all motor neurons which also express RET and in almost all DRG sensory neurons which also express NTRK1. At 18.5 dpc, expressed only in a subset of NTRK1-expressing neurons but still expressed in nearly all RET-expressing neurons.

It is found in the cell membrane. Functionally, required for axon extension during neural development. The polypeptide is Immunoglobulin superfamily containing leucine-rich repeat protein 2 (Islr2) (Mus musculus (Mouse)).